Reading from the N-terminus, the 102-residue chain is UPF0235 protein msl4154 (102 aa).

It belongs to the UPF0235 family.

The polypeptide is UPF0235 protein msl4154 (Mesorhizobium japonicum (strain LMG 29417 / CECT 9101 / MAFF 303099) (Mesorhizobium loti (strain MAFF 303099))).